A 104-amino-acid chain; its full sequence is Protein S100-A14 (104 aa).

Positions 27–61 (KNFHQYSVEGGKETLTPSELRDLVTQQLPHLMPSN) constitute an EF-hand domain.

It belongs to the S-100 family. As to quaternary structure, homodimer. Interacts with AGER. As to expression, expressed at highest levels in colon and at moderate levels in thymus, kidney, liver, small intestine, and lung. Low expression in heart and no expression is seen in brain, skeletal muscle, spleen, placenta and peripheral blood leukocytes.

Its subcellular location is the cytoplasm. Modulates P53/TP53 protein levels, and thereby plays a role in the regulation of cell survival and apoptosis. Depending on the context, it can promote cell proliferation or apoptosis. Plays a role in the regulation of cell migration by modulating the levels of MMP2, a matrix protease that is under transcriptional control of P53/TP53. Does not bind calcium. This is Protein S100-A14 (S100A14) from Homo sapiens (Human).